Here is a 128-residue protein sequence, read N- to C-terminus: D-ribose pyranase (128 aa).

The active-site Proton donor is H20. Residues D28, H95, and 117-119 (YSN) each bind substrate.

It belongs to the RbsD / FucU family. RbsD subfamily. Homodecamer.

The protein resides in the cytoplasm. It catalyses the reaction beta-D-ribopyranose = beta-D-ribofuranose. It functions in the pathway carbohydrate metabolism; D-ribose degradation; D-ribose 5-phosphate from beta-D-ribopyranose: step 1/2. In terms of biological role, catalyzes the interconversion of beta-pyran and beta-furan forms of D-ribose. This chain is D-ribose pyranase, found in Thermosipho africanus (strain TCF52B).